The following is a 556-amino-acid chain: Formate--tetrahydrofolate ligase (556 aa).

An ATP-binding site is contributed by 65–72; the sequence is TPAGEGKT.

It belongs to the formate--tetrahydrofolate ligase family.

It carries out the reaction (6S)-5,6,7,8-tetrahydrofolate + formate + ATP = (6R)-10-formyltetrahydrofolate + ADP + phosphate. It functions in the pathway one-carbon metabolism; tetrahydrofolate interconversion. In Lachnoclostridium phytofermentans (strain ATCC 700394 / DSM 18823 / ISDg) (Clostridium phytofermentans), this protein is Formate--tetrahydrofolate ligase.